The following is a 663-amino-acid chain: UvrABC system protein B (663 aa).

A Helicase ATP-binding domain is found at 31 to 418; the sequence is DNIEGGEKAQ…TDTVVEQIIR (388 aa). Residue 44 to 51 participates in ATP binding; the sequence is GATGTGKT. A Beta-hairpin motif is present at residues 97–120; the sequence is YYDYYQPEAYVPSSDTYIEKDSSV. Residues 435–601 form the Helicase C-terminal domain; that stretch reads QMDDLLGEIN…TIKKEIRDLI (167 aa). Residues 627–662 enclose the UVR domain; it reads QAEIKALQKQMQEAAELLDFELAAQIRDVILKLKAI.

The protein belongs to the UvrB family. As to quaternary structure, forms a heterotetramer with UvrA during the search for lesions. Interacts with UvrC in an incision complex.

Its subcellular location is the cytoplasm. Functionally, the UvrABC repair system catalyzes the recognition and processing of DNA lesions. A damage recognition complex composed of 2 UvrA and 2 UvrB subunits scans DNA for abnormalities. Upon binding of the UvrA(2)B(2) complex to a putative damaged site, the DNA wraps around one UvrB monomer. DNA wrap is dependent on ATP binding by UvrB and probably causes local melting of the DNA helix, facilitating insertion of UvrB beta-hairpin between the DNA strands. Then UvrB probes one DNA strand for the presence of a lesion. If a lesion is found the UvrA subunits dissociate and the UvrB-DNA preincision complex is formed. This complex is subsequently bound by UvrC and the second UvrB is released. If no lesion is found, the DNA wraps around the other UvrB subunit that will check the other stand for damage. In Streptococcus agalactiae serotype Ia (strain ATCC 27591 / A909 / CDC SS700), this protein is UvrABC system protein B.